We begin with the raw amino-acid sequence, 204 residues long: COBRA-like protein 5 (204 aa).

Positions 1 to 24 are cleaved as a signal peptide; it reads MESLFSTMIVLLLVSFSCLISTEA. N-linked (GlcNAc...) asparagine glycosylation is found at Asn-31 and Asn-195.

It belongs to the COBRA family. In terms of tissue distribution, expressed in roots, stems, leaves, flowers and siliques.

This is COBRA-like protein 5 (COBL5) from Arabidopsis thaliana (Mouse-ear cress).